Reading from the N-terminus, the 401-residue chain is Phosphoglycerate kinase (401 aa).

Substrate-binding positions include 24–26, Arg40, 63–66, Arg122, and Arg155; these read DFN and HFGR. ATP is bound by residues Lys206, Gly297, Glu328, and 357–360; that span reads GGDS.

Belongs to the phosphoglycerate kinase family. In terms of assembly, monomer.

The protein resides in the cytoplasm. The enzyme catalyses (2R)-3-phosphoglycerate + ATP = (2R)-3-phospho-glyceroyl phosphate + ADP. It functions in the pathway carbohydrate degradation; glycolysis; pyruvate from D-glyceraldehyde 3-phosphate: step 2/5. In Prochlorococcus marinus (strain NATL2A), this protein is Phosphoglycerate kinase.